Here is a 348-residue protein sequence, read N- to C-terminus: Fe-S cluster assembly protein DRE2 (348 aa).

The N-terminal SAM-like domain stretch occupies residues 1-158; the sequence is MSQYKTGLLL…LPTFKKASSS (158 aa). Residues 137–170 form a disordered region; sequence KTNNTKLQSGSKLPTFKKASSSTSNLPSFKKADH. The segment covering 144 to 163 has biased composition (polar residues); the sequence is QSGSKLPTFKKASSSTSNLP. Residues 159-242 are linker; that stretch reads TSNLPSFKKA…EEELIDEDGS (84 aa). The residue at position 206 (S206) is a Phosphoserine. 4 residues coordinate [2Fe-2S] cluster: C252, C263, C266, and C268. The interval 252 to 268 is fe-S binding site A; the sequence is CGKSKTKKKKACKDCTC. [4Fe-4S] cluster contacts are provided by C311, C314, C322, and C325. 2 consecutive short sequence motifs (cx2C motif) follow at residues 311 to 314 and 322 to 325; these read CGSC and CSGC. Positions 311 to 325 are fe-S binding site B; that stretch reads CGSCSLGDAFRCSGC.

The protein belongs to the anamorsin family. In terms of assembly, monomer. Interacts with TAH18. Interacts with MIA40. [2Fe-2S] cluster is required as a cofactor. The cofactor is [4Fe-4S] cluster. Post-translationally, ubiquitinated.

The protein localises to the cytoplasm. The protein resides in the mitochondrion intermembrane space. In terms of biological role, component of the cytosolic iron-sulfur (Fe-S) protein assembly (CIA) machinery required for the maturation of extramitochondrial Fe-S proteins. Part of an electron transfer chain functioning in an early step of cytosolic Fe-S biogenesis, facilitating the de novo assembly of a [4Fe-4S] cluster on the scaffold complex CFD1-NBP35. Electrons are transferred to DRE2 from NADPH via the FAD- and FMN-containing protein TAH18. TAH18-DRE2 are also required for the assembly of the diferric tyrosyl radical cofactor of ribonucleotide reductase (RNR), probably by providing electrons for reduction during radical cofactor maturation in the catalytic small subunit RNR2. Has anti-apoptotic effects in the cell. Involved in negative control of H(2)O(2)-induced cell death. In Saccharomyces cerevisiae (strain ATCC 204508 / S288c) (Baker's yeast), this protein is Fe-S cluster assembly protein DRE2.